The primary structure comprises 415 residues: Hydroxysteroid dehydrogenase-like protein 2 (415 aa).

Residues 17–23 (GASRGIG), K42, and D74 each bind NADP(+). The Proton acceptor role is filled by Y168. Position 172 (K172) interacts with NADP(+). In terms of domain architecture, SCP2 spans 304–412 (AGPVSEMFNT…KLEKMMAMMK (109 aa)).

This sequence belongs to the short-chain dehydrogenases/reductases (SDR) family.

It localises to the peroxisome. Its subcellular location is the mitochondrion. Has apparently no steroid dehydrogenase activity. Might act as a metabolic regulator that affects systemic adaptation to nutritional cues. In Danio rerio (Zebrafish), this protein is Hydroxysteroid dehydrogenase-like protein 2 (hsdl2).